The following is a 386-amino-acid chain: S-adenosylmethionine synthase (386 aa).

ATP is bound at residue His-16. Residue Asp-18 coordinates Mg(2+). Glu-44 is a K(+) binding site. L-methionine-binding residues include Glu-57 and Gln-100. The tract at residues 100-110 is flexible loop; that stretch reads QSPDINQGVDQ. ATP is bound by residues 164-166, 230-231, Asp-239, 245-246, Ala-262, and Lys-266; these read DGK, RF, and RK. Asp-239 contributes to the L-methionine binding site. Position 270 (Lys-270) interacts with L-methionine.

Belongs to the AdoMet synthase family. In terms of assembly, homotetramer; dimer of dimers. It depends on Mg(2+) as a cofactor. K(+) is required as a cofactor.

It localises to the cytoplasm. The catalysed reaction is L-methionine + ATP + H2O = S-adenosyl-L-methionine + phosphate + diphosphate. It functions in the pathway amino-acid biosynthesis; S-adenosyl-L-methionine biosynthesis; S-adenosyl-L-methionine from L-methionine: step 1/1. Functionally, catalyzes the formation of S-adenosylmethionine (AdoMet) from methionine and ATP. The overall synthetic reaction is composed of two sequential steps, AdoMet formation and the subsequent tripolyphosphate hydrolysis which occurs prior to release of AdoMet from the enzyme. The chain is S-adenosylmethionine synthase from Nitratiruptor sp. (strain SB155-2).